A 475-amino-acid chain; its full sequence is E3 ubiquitin-protein ligase TRIM62 (475 aa).

An RING-type zinc finger spans residues 11 to 54 (CSICLSIYQDPVSLGCEHYFCRRCITEHWVRQEAQGARDCPECR). The B box-type zinc-finger motif lies at 88 to 128 (RAARPCQAHDKVKLFCLTDRALLCFFCDEPALHEQHQVTGI). Positions 93, 96, 114, and 120 each coordinate Zn(2+). Positions 121–241 (EQHQVTGIDD…LQERLAETDR (121 aa)) form a coiled coil. The region spanning 277 to 475 (PLQYTIWKSL…QPLRINTVRI (199 aa)) is the B30.2/SPRY domain.

Belongs to the TRIM/RBCC family. Interacts with the ubiquitin-conjugating enzyme, UBE2D2. Post-translationally, polyubiquitinated, autoubiquitinated in the presence of UBE2D2.

It is found in the cytoplasm. The catalysed reaction is S-ubiquitinyl-[E2 ubiquitin-conjugating enzyme]-L-cysteine + [acceptor protein]-L-lysine = [E2 ubiquitin-conjugating enzyme]-L-cysteine + N(6)-ubiquitinyl-[acceptor protein]-L-lysine.. It participates in protein modification; protein ubiquitination. E3 ubiquitin ligase that plays a role in antifungal immunity by mediating 'Lys-27'-linked ubiquitination of CARD9 downstream of C-type lectin receptors; leading to CARD9 activation, followed by activation of NF-kappa-B and MAP kinase p38 pathways. E3 ubiquitin ligase activity is dependent on E2 ubiquitin-conjugating enzyme UBE2D2. This is E3 ubiquitin-protein ligase TRIM62 from Mus musculus (Mouse).